The primary structure comprises 172 residues: uncharacterized protein (172 aa).

A Ferritin-like diiron domain is found at 1–148; it reads MANSQKVIDV…TIHDFFENGN (148 aa).

This is an uncharacterized protein from Ureaplasma urealyticum (Ureaplasma urealyticum biotype 2).